A 524-amino-acid chain; its full sequence is MEPFLLLLLVLLPAIVLVRYAFTYGHRTSTMPIGPPTLPFIGNIHQITKKYTHIKFTEWAAQYGGLYMLKIGNGNMAVITDRRLVKEVLDRKSGIYSHRPHSFVSHDLITKGNHLLVMHYGDQWRTFRRLVHQHLMETMVENHHTKIVNAEAIQLVRDYMIDPEHHMAHPKRYSNSITNSIVFGIRTANREGANMRRLYKLMEEWSEVMETGATPPVDLFPWLKLLPQWLFNNYIDRAKAIGVQMETLYVDILNKVIKRREDGHNNGTFMDKVLDSQEKHNLPWHQLAFIGGVLMEGGSDTSSSLTLAIVQALIQNPDVQRKAHAEIDAVVGHNRSPVWEDFEKLPYINMIIKEGHRWRPILPLCFPHALGEDDWVDGKFLPKGTIVVVNTWGMHMDPSQPDDPAAFIPERFAKHPQLAPDYVPGTWERRDHYGYGVGRRICPGIHLAERNMFLGIAKLLWAFDFQPGEGPIDSDPVTGYHNGFLYCAKDYSCRPVIRNEVIRDTIEREYATATADVFSRFTEG.

Residues Met1–Phe4 are Cytoplasmic-facing. The helical transmembrane segment at Leu5–Phe22 threads the bilayer. Topologically, residues Thr23–Gly524 are lumenal. An N-linked (GlcNAc...) asparagine glycan is attached at Asn266. Cys442 lines the heme pocket.

This sequence belongs to the cytochrome P450 family. Heme is required as a cofactor.

It localises to the endoplasmic reticulum membrane. It carries out the reaction 3-methylphenol + reduced [NADPH--hemoprotein reductase] + O2 = 3-hydroxybenzyl alcohol + oxidized [NADPH--hemoprotein reductase] + H2O + H(+). Its pathway is mycotoxin biosynthesis; patulin biosynthesis. Functionally, cytochrome P450 monooxygenase; part of the gene cluster that mediates the biosynthesis of patulin, an acetate-derived tetraketide mycotoxin produced by several fungal species that shows antimicrobial properties against several bacteria. PatH catalyzes the conversion of m-cresol into m-hydroxybenzyl alcohol. The pathway begins with the synthesis of 6-methylsalicylic acid by the polyketide synthase (PKS) patK via condensation of acetate and malonate units. The 6-methylsalicylic acid decarboxylase patG then catalyzes the decarboxylation of 6-methylsalicylic acid to yield m-cresol (also known as 3-methylphenol). These first reactions occur in the cytosol. The intermediate m-cresol is then transported into the endoplasmic reticulum where the cytochrome P450 monooxygenase patH converts it to m-hydroxybenzyl alcohol, which is further converted to gentisyl alcohol by the cytochrome P450 monooxygenase patI. The oxidoreductases patJ and patO further convert gentisyl alcohol to isoepoxydon in the vacuole. PatN catalyzes then the transformation of isoepoxydon into phyllostine. The cluster protein patF is responsible for the conversion from phyllostine to neopatulin whereas the alcohol dehydrogenase patD converts neopatulin to E-ascladiol. The steps between isoepoxydon and E-ascladiol occur in the cytosol, and E-ascladiol is probably secreted to the extracellular space by one of the cluster-specific transporters patC or patM. Finally, the secreted patulin synthase patE catalyzes the conversion of E-ascladiol to patulin. The sequence is that of Cytochrome P450 monooxygenase patH from Penicillium expansum (Blue mold rot fungus).